Here is a 597-residue protein sequence, read N- to C-terminus: FERM domain-containing protein 3 (597 aa).

Residues 32-312 (MRCTIRLLDD…ENQAFYKYAK (281 aa)) form the FERM domain. Residues 383–403 (LLPSPSEQEEELPLGEGVPLP) are disordered. Residues 531–551 (LLVVGLGLLLFVFPLLLLLLE) form a helical membrane-spanning segment.

As to expression, ovary-specific.

It is found in the membrane. Putative tumor suppressor gene that may be implicated in the origin and progression of lung cancer. The polypeptide is FERM domain-containing protein 3 (FRMD3) (Homo sapiens (Human)).